Here is a 376-residue protein sequence, read N- to C-terminus: NAD-capped RNA hydrolase (376 aa).

Residues Cys-182, Cys-185, Cys-200, and Cys-211 each coordinate Zn(2+). Substrate-binding positions include Tyr-222, Ala-258 to Phe-260, Glu-274, Glu-278, and Glu-321. A Nudix hydrolase domain is found at Pro-223–Pro-351. Residues Ala-258, Glu-274, Glu-278, and Glu-321 each coordinate Mg(2+). The Nudix box signature appears at Gly-259–Gly-280. The Microbody targeting signal motif lies at Val-374–Met-376.

It belongs to the Nudix hydrolase family. NudC subfamily. As to quaternary structure, homodimer. The cofactor is Mg(2+). Zn(2+) serves as cofactor.

It catalyses the reaction a 5'-end NAD(+)-phospho-ribonucleoside in mRNA + H2O = a 5'-end phospho-adenosine-phospho-ribonucleoside in mRNA + beta-nicotinamide D-ribonucleotide + 2 H(+). It carries out the reaction NAD(+) + H2O = beta-nicotinamide D-ribonucleotide + AMP + 2 H(+). The enzyme catalyses NADH + H2O = reduced beta-nicotinamide D-ribonucleotide + AMP + 2 H(+). MRNA decapping enzyme that specifically removes the nicotinamide adenine dinucleotide (NAD) cap from a subset of mRNAs by hydrolyzing the diphosphate linkage to produce nicotinamide mononucleotide (NMN) and 5' monophosphate mRNA. The NAD-cap is present at the 5'-end of some RNAs; in contrast to the canonical N7 methylguanosine (m7G) cap, the NAD cap promotes mRNA decay. Mediates the hydrolysis of some nucleoside diphosphate derivatives. This is NAD-capped RNA hydrolase from Schizosaccharomyces pombe (strain 972 / ATCC 24843) (Fission yeast).